The following is a 381-amino-acid chain: Cobalt-precorrin-5B C(1)-methyltransferase (381 aa).

The protein belongs to the CbiD family.

It catalyses the reaction Co-precorrin-5B + S-adenosyl-L-methionine = Co-precorrin-6A + S-adenosyl-L-homocysteine. It functions in the pathway cofactor biosynthesis; adenosylcobalamin biosynthesis; cob(II)yrinate a,c-diamide from sirohydrochlorin (anaerobic route): step 6/10. Catalyzes the methylation of C-1 in cobalt-precorrin-5B to form cobalt-precorrin-6A. This Clostridium botulinum (strain Eklund 17B / Type B) protein is Cobalt-precorrin-5B C(1)-methyltransferase.